The following is a 161-amino-acid chain: Regulator of ribonuclease activity A (161 aa).

It belongs to the RraA family. In terms of assembly, homotrimer. Binds to both RNA-binding sites in the C-terminal region of Rne and to RhlB.

It localises to the cytoplasm. Its function is as follows. Globally modulates RNA abundance by binding to RNase E (Rne) and regulating its endonucleolytic activity. Can modulate Rne action in a substrate-dependent manner by altering the composition of the degradosome. Modulates RNA-binding and helicase activities of the degradosome. This chain is Regulator of ribonuclease activity A, found in Shewanella denitrificans (strain OS217 / ATCC BAA-1090 / DSM 15013).